The sequence spans 201 residues: Adenylyl-sulfate kinase (201 aa).

Position 35-42 (35-42 (GLSGSGKS)) interacts with ATP. Ser-109 acts as the Phosphoserine intermediate in catalysis.

The protein belongs to the APS kinase family.

It carries out the reaction adenosine 5'-phosphosulfate + ATP = 3'-phosphoadenylyl sulfate + ADP + H(+). The protein operates within sulfur metabolism; hydrogen sulfide biosynthesis; sulfite from sulfate: step 2/3. Catalyzes the synthesis of activated sulfate. In Bacteroides thetaiotaomicron (strain ATCC 29148 / DSM 2079 / JCM 5827 / CCUG 10774 / NCTC 10582 / VPI-5482 / E50), this protein is Adenylyl-sulfate kinase.